Consider the following 118-residue polypeptide: Non-specific lipid-transfer protein-like 1 (118 aa).

The 109-residue stretch at 5-113 (SDVIFEEIKE…KLRTILDPKM (109 aa)) folds into the SCP2 domain.

This Caenorhabditis elegans protein is Non-specific lipid-transfer protein-like 1 (nlt-1).